A 315-amino-acid chain; its full sequence is Lipoyl synthase (315 aa).

[4Fe-4S] cluster is bound by residues cysteine 62, cysteine 67, cysteine 73, cysteine 88, cysteine 92, cysteine 95, and serine 302. Residues 73–291 enclose the Radical SAM core domain; sequence CFGHGTATFM…GELAKKLGFS (219 aa).

The protein belongs to the radical SAM superfamily. Lipoyl synthase family. [4Fe-4S] cluster serves as cofactor.

Its subcellular location is the cytoplasm. It carries out the reaction [[Fe-S] cluster scaffold protein carrying a second [4Fe-4S](2+) cluster] + N(6)-octanoyl-L-lysyl-[protein] + 2 oxidized [2Fe-2S]-[ferredoxin] + 2 S-adenosyl-L-methionine + 4 H(+) = [[Fe-S] cluster scaffold protein] + N(6)-[(R)-dihydrolipoyl]-L-lysyl-[protein] + 4 Fe(3+) + 2 hydrogen sulfide + 2 5'-deoxyadenosine + 2 L-methionine + 2 reduced [2Fe-2S]-[ferredoxin]. It participates in protein modification; protein lipoylation via endogenous pathway; protein N(6)-(lipoyl)lysine from octanoyl-[acyl-carrier-protein]: step 2/2. Functionally, catalyzes the radical-mediated insertion of two sulfur atoms into the C-6 and C-8 positions of the octanoyl moiety bound to the lipoyl domains of lipoate-dependent enzymes, thereby converting the octanoylated domains into lipoylated derivatives. The protein is Lipoyl synthase of Coxiella burnetii (strain CbuG_Q212) (Coxiella burnetii (strain Q212)).